Reading from the N-terminus, the 277-residue chain is Large ribosomal subunit protein uL2 (277 aa).

Positions 222-277 are disordered; sequence GVAMNPVDHPHGGGEGRTSGGRHPVSPWGKPTKGKRTRSNKATDKFIMRTRHQRKK.

Belongs to the universal ribosomal protein uL2 family. As to quaternary structure, part of the 50S ribosomal subunit. Forms a bridge to the 30S subunit in the 70S ribosome.

One of the primary rRNA binding proteins. Required for association of the 30S and 50S subunits to form the 70S ribosome, for tRNA binding and peptide bond formation. It has been suggested to have peptidyltransferase activity; this is somewhat controversial. Makes several contacts with the 16S rRNA in the 70S ribosome. This Bartonella tribocorum (strain CIP 105476 / IBS 506) protein is Large ribosomal subunit protein uL2.